A 787-amino-acid chain; its full sequence is Putative pentatricopeptide repeat-containing protein At1g69350, mitochondrial (787 aa).

The transit peptide at 1–16 directs the protein to the mitochondrion; that stretch reads MTQYMPLFRSCSSLRL. PPR repeat units follow at residues 33–63, 64–98, 99–134, 135–165, 166–200, 201–235, 236–266, 267–301, 302–336, 338–368, 369–403, 404–434, 438–468, 469–503, 504–534, 538–568, 569–603, 604–638, and 639–669; these read DPLPVTKLIESYAFMGSPDSSRLVFEAFPYP, DSFMYGVLIKCNVWCHLLDAAIDLYHRLVSETTQI, SKFVFPSVLRACAGSREHLSVGGKVHGRIIKGGVDD, DAVIETSLLCMYGQTGNLSDAEKVFDGMPVR, DLVAWSTLVSSCLENGEVVKALRMFKCMVDDGVEP, DAVTMISVVEGCAELGCLRIARSVHGQITRKMFDL, DETLCNSLLTMYSKCGDLLSSERIFEKIAKK, NAVSWTAMISSYNRGEFSEKALRSFSEMIKSGIEP, NLVTLYSVLSSCGLIGLIREGKSVHGFAVRRELDP, YESLSLALVELYAECGKLSDCETVLRVVSDR, NIVAWNSLISLYAHRGMVIQALGLFRQMVTQRIKP, DAFTLASSISACENAGLVPLGKQIHGHVIRT, DEFVQNSLIDMYSKSGSVDSASTVFNQIKHR, SVVTWNSMLCGFSQNGNSVEAISLFDYMYHSYLEM, NEVTFLAVIQACSSIGSLEKGKWVHHKLIIS, DLFTDTALIDMYAKCGDLNAAETVFRAMSSR, SIVSWSSMINAYGMHGRIGSAISTFNQMVESGTKP, NEVVFMNVLSACGHSGSVEEGKYYFNLMKSFGVSP, and NSEHFACFIDLLSRSGDLKEAYRTIKEMPFL. Positions 674–749 are type E motif; that stretch reads VWGSLVNGCR…VPGYSAIEID (76 aa). The tract at residues 750-780 is type E(+) motif; the sequence is QKVFRFGAGEENRIQTDEIYRFLGNLQNLTN.

It belongs to the PPR family. PCMP-E subfamily.

The protein localises to the mitochondrion. This chain is Putative pentatricopeptide repeat-containing protein At1g69350, mitochondrial (PCMP-E66), found in Arabidopsis thaliana (Mouse-ear cress).